An 89-amino-acid chain; its full sequence is UPF0367 protein CYB_2632 (89 aa).

The tract at residues 69–89 is disordered; sequence SKSGSASPMGTRPGFLAQLQS.

Belongs to the UPF0367 family.

In Synechococcus sp. (strain JA-2-3B'a(2-13)) (Cyanobacteria bacterium Yellowstone B-Prime), this protein is UPF0367 protein CYB_2632.